The chain runs to 242 residues: Copper transport protein B (242 aa).

The next 2 helical transmembrane spans lie at 8-28 (ICLCFVISSPYVYLVSIACVL) and 86-106 (ITGPFSLLMSLIVIVLLTAGY). The disordered stretch occupies residues 153-175 (ESATTNVPSSQTPNESSPLVAGR). Over residues 154-169 (SATTNVPSSQTPNESS) the composition is skewed to polar residues. Transmembrane regions (helical) follow at residues 187 to 207 (IILAALYAVQVFYSFFIMLLF) and 210 to 230 (YNGFVMLAVAVGAFAGYLVFG).

This sequence belongs to the copper transporter (Ctr) (TC 1.A.56) family. SLC31A subfamily.

The protein resides in the membrane. In terms of biological role, transporter that is probably involved in the transport of copper, even if it does not act as a major copper transporter. The polypeptide is Copper transport protein B (Aspergillus fumigatus (strain ATCC MYA-4609 / CBS 101355 / FGSC A1100 / Af293) (Neosartorya fumigata)).